A 267-amino-acid polypeptide reads, in one-letter code: Ubiquinone biosynthesis protein COQ4, mitochondrial (267 aa).

Residues 1 to 17 (MSRLKIPSQLLRGGRGF) constitute a mitochondrion transit peptide. Zn(2+) is bound by residues His-153, Asp-154, His-157, and Glu-169.

This sequence belongs to the COQ4 family. In terms of assembly, component of a multi-subunit COQ enzyme complex, composed of at least COQ3, COQ4, COQ5, COQ6, COQ7 and COQ9. Zn(2+) serves as cofactor.

The protein localises to the mitochondrion inner membrane. The catalysed reaction is a 4-hydroxy-3-methoxy-5-(all-trans-polyprenyl)benzoate + H(+) = a 2-methoxy-6-(all-trans-polyprenyl)phenol + CO2. Its pathway is cofactor biosynthesis; ubiquinone biosynthesis. Its function is as follows. Lyase that catalyzes the C1-decarboxylation of 4-hydroxy-3-methoxy-5-(all-trans-polyprenyl)benzoic acid into 2-methoxy-6-(all-trans-polyprenyl)phenol during ubiquinone biosynthesis. In Arthroderma otae (strain ATCC MYA-4605 / CBS 113480) (Microsporum canis), this protein is Ubiquinone biosynthesis protein COQ4, mitochondrial.